The sequence spans 449 residues: Trigger factor (449 aa).

The region spanning 173–258 (GDRVTVDFVG…LKKVEWPHLP (86 aa)) is the PPIase FKBP-type domain.

The protein belongs to the FKBP-type PPIase family. Tig subfamily.

It localises to the cytoplasm. The enzyme catalyses [protein]-peptidylproline (omega=180) = [protein]-peptidylproline (omega=0). In terms of biological role, involved in protein export. Acts as a chaperone by maintaining the newly synthesized protein in an open conformation. Functions as a peptidyl-prolyl cis-trans isomerase. This Burkholderia pseudomallei (strain 1710b) protein is Trigger factor.